We begin with the raw amino-acid sequence, 428 residues long: MTQILEVTAREILDSRGNPTVEVDVYTESGAIGRAAVPSGASTGTREALELRDKKSKRYGGKGVAQAVKNVNEIIAPLIIGMDAADQAAVDLAMLDEDGTENKSKLGANAILGVSLATARAAADAFGFPLYRYLGGVAGQTLPLPMMNIINGGEHAANNLDIQEFMIIPKGAKTAAEAVRMGAEVFANLKAILKKGGHATAVGDEGGFAPDLDTNEEAFKCIMDAIKAAGYKAGKDIVLAIDAAASEFCVKGKYELKGEGKSLTTTQMIDYYEEMISKYPIVSIEDGLAEGDWDGWGEMTQRLGSIQLVGDDIFVTNPSIFRKGIEKGVGNSILVKLNQIGSLTETLQTIDLAKRYGYTTVISHRSGETEDTFISDLAVAVNAGQIKTGSLSRTDRVAKYNQLIRIEEDLGRAASFGTPFDKITDSKK.

Position 163 (glutamine 163) interacts with (2R)-2-phosphoglycerate. Glutamate 205 (proton donor) is an active-site residue. Residues aspartate 242, glutamate 285, and aspartate 311 each contribute to the Mg(2+) site. The (2R)-2-phosphoglycerate site is built by lysine 336, arginine 365, serine 366, and lysine 387. Lysine 336 (proton acceptor) is an active-site residue.

This sequence belongs to the enolase family. Mg(2+) is required as a cofactor.

Its subcellular location is the cytoplasm. It localises to the secreted. The protein resides in the cell surface. The catalysed reaction is (2R)-2-phosphoglycerate = phosphoenolpyruvate + H2O. It functions in the pathway carbohydrate degradation; glycolysis; pyruvate from D-glyceraldehyde 3-phosphate: step 4/5. Functionally, catalyzes the reversible conversion of 2-phosphoglycerate (2-PG) into phosphoenolpyruvate (PEP). It is essential for the degradation of carbohydrates via glycolysis. This Desulfatibacillum aliphaticivorans protein is Enolase.